The sequence spans 158 residues: NADH-quinone oxidoreductase subunit B (158 aa).

Residues C37, C38, C102, and C132 each coordinate [4Fe-4S] cluster.

The protein belongs to the complex I 20 kDa subunit family. As to quaternary structure, NDH-1 is composed of 14 different subunits. Subunits NuoB, C, D, E, F, and G constitute the peripheral sector of the complex. The cofactor is [4Fe-4S] cluster.

It localises to the cell inner membrane. The enzyme catalyses a quinone + NADH + 5 H(+)(in) = a quinol + NAD(+) + 4 H(+)(out). In terms of biological role, NDH-1 shuttles electrons from NADH, via FMN and iron-sulfur (Fe-S) centers, to quinones in the respiratory chain. Couples the redox reaction to proton translocation (for every two electrons transferred, four hydrogen ions are translocated across the cytoplasmic membrane), and thus conserves the redox energy in a proton gradient. This is NADH-quinone oxidoreductase subunit B from Hydrogenovibrio crunogenus (strain DSM 25203 / XCL-2) (Thiomicrospira crunogena).